A 333-amino-acid polypeptide reads, in one-letter code: uncharacterized protein (333 aa).

The stretch at 94–122 forms a coiled coil; sequence NLYREVWRELEEEQNKVEKLREYILKLDS.

This is an uncharacterized protein from Aquifex aeolicus (strain VF5).